Consider the following 348-residue polypeptide: Protein-glutamate methylesterase/protein-glutamine glutaminase 2 (348 aa).

The region spanning 5-122 (KVLIIDDSAL…DLGLSQYRDE (118 aa)) is the Response regulatory domain. The residue at position 56 (Asp56) is a 4-aspartylphosphate. Residues 157–348 (SLKTGFLCAI…AANIIKHALK (192 aa)) form the CheB-type methylesterase domain. Residues Ser169, His195, and Asp291 contribute to the active site.

Belongs to the CheB family. Post-translationally, phosphorylated by CheA. Phosphorylation of the N-terminal regulatory domain activates the methylesterase activity.

Its subcellular location is the cytoplasm. It catalyses the reaction [protein]-L-glutamate 5-O-methyl ester + H2O = L-glutamyl-[protein] + methanol + H(+). The enzyme catalyses L-glutaminyl-[protein] + H2O = L-glutamyl-[protein] + NH4(+). Functionally, involved in chemotaxis. Part of a chemotaxis signal transduction system that modulates chemotaxis in response to various stimuli. Catalyzes the demethylation of specific methylglutamate residues introduced into the chemoreceptors (methyl-accepting chemotaxis proteins or MCP) by CheR. Also mediates the irreversible deamidation of specific glutamine residues to glutamic acid. This Saccharophagus degradans (strain 2-40 / ATCC 43961 / DSM 17024) protein is Protein-glutamate methylesterase/protein-glutamine glutaminase 2.